Here is a 145-residue protein sequence, read N- to C-terminus: D-aminoacyl-tRNA deacylase (145 aa).

A Gly-cisPro motif, important for rejection of L-amino acids motif is present at residues 137-138; that stretch reads GP.

This sequence belongs to the DTD family. Homodimer.

Its subcellular location is the cytoplasm. The catalysed reaction is glycyl-tRNA(Ala) + H2O = tRNA(Ala) + glycine + H(+). The enzyme catalyses a D-aminoacyl-tRNA + H2O = a tRNA + a D-alpha-amino acid + H(+). An aminoacyl-tRNA editing enzyme that deacylates mischarged D-aminoacyl-tRNAs. Also deacylates mischarged glycyl-tRNA(Ala), protecting cells against glycine mischarging by AlaRS. Acts via tRNA-based rather than protein-based catalysis; rejects L-amino acids rather than detecting D-amino acids in the active site. By recycling D-aminoacyl-tRNA to D-amino acids and free tRNA molecules, this enzyme counteracts the toxicity associated with the formation of D-aminoacyl-tRNA entities in vivo and helps enforce protein L-homochirality. The chain is D-aminoacyl-tRNA deacylase from Saccharophagus degradans (strain 2-40 / ATCC 43961 / DSM 17024).